A 165-amino-acid chain; its full sequence is Nucleotide-binding protein CFF8240_1664 (165 aa).

It belongs to the YajQ family.

In terms of biological role, nucleotide-binding protein. This Campylobacter fetus subsp. fetus (strain 82-40) protein is Nucleotide-binding protein CFF8240_1664.